The chain runs to 58 residues: Photosystem II reaction center protein K (58 aa).

The propeptide occupies 1-21 (MLNMISTFFDSSSNFSEAFLA). A helical membrane pass occupies residues 29 to 49 (IFDPIVDVMPIIPVFFLLLAF).

This sequence belongs to the PsbK family. PSII is composed of 1 copy each of membrane proteins PsbA, PsbB, PsbC, PsbD, PsbE, PsbF, PsbH, PsbI, PsbJ, PsbK, PsbL, PsbM, PsbT, PsbX, PsbY, PsbZ, Psb30/Ycf12, at least 3 peripheral proteins of the oxygen-evolving complex and a large number of cofactors. It forms dimeric complexes.

It localises to the plastid. Its subcellular location is the chloroplast thylakoid membrane. Functionally, one of the components of the core complex of photosystem II (PSII). PSII is a light-driven water:plastoquinone oxidoreductase that uses light energy to abstract electrons from H(2)O, generating O(2) and a proton gradient subsequently used for ATP formation. It consists of a core antenna complex that captures photons, and an electron transfer chain that converts photonic excitation into a charge separation. In Chaetosphaeridium globosum (Charophycean green alga), this protein is Photosystem II reaction center protein K.